The following is a 625-amino-acid chain: Vitamin B12 transporter BtuB (625 aa).

A signal peptide spans 1–21 (MTIKKYTLLTALSVTAFSGWA). The TonB box signature appears at 31–38 (DEMVVTAN). Positions 43 to 157 (PKSSVLAPVD…IGGVINILTG (115 aa)) constitute a TBDR plug domain. Cyanocob(III)alamin-binding positions include serine 90, asparagine 97, and 115-116 (IT). One can recognise a TBDR beta-barrel domain in the interval 160-625 (KPGTTLSAGL…EYYFTGSYNF (466 aa)). 3 consecutive transmembrane segments (beta stranded) span residues 163–170 (TTLSAGLG), 174–183 (YQTYDGSTQQ), and 189–200 (TTVTLAGNYTYS). Ca(2+)-binding residues include aspartate 204, glutamine 217, aspartate 219, and aspartate 221. The next 2 membrane-spanning stretches (beta stranded) occupy residues 223–233 (FMGKMLWAGLE) and 238–254 (EQFN…NRSD). Ca(2+)-binding residues include tyrosine 255, aspartate 256, and aspartate 269. A run of 14 beta stranded transmembrane segments spans residues 271–285 (RKLS…LRYK), 287–304 (GIYA…KDYN), 317–333 (SLDE…NTFQ), 336–345 (NGMISAGADW), 363–379 (FTQH…QQIS), 381–391 (VTLEGAVRSDD), 395–410 (FGWH…WEFI), 413–427 (YRLI…KAPN), 445–454 (ESKQWEGGVE), 460–469 (LTWRLSAYRN), 484–501 (YFNI…TGSF), 505–520 (PLSH…PRNA), 528–540 (RRAK…QLDW), and 546–561 (DWSV…YDKD). Residue serine 317 coordinates cyanocob(III)alamin. Arginine 528 contributes to the cyanocob(III)alamin binding site. Residue tyrosine 562 coordinates cyanocob(III)alamin. Beta stranded transmembrane passes span 569-583 (TVEL…LAVS), 596-607 (IANLFDKDYEMV), and 613-625 (PGRE…SYNF). Positions 608–625 (YGYQTPGREYYFTGSYNF) match the TonB C-terminal box motif.

Belongs to the TonB-dependent receptor family. BtuB (TC 1.B.14.3.1) subfamily.

Its subcellular location is the cell outer membrane. Involved in the active translocation of vitamin B12 (cyanocobalamin) across the outer membrane to the periplasmic space. It derives its energy for transport by interacting with the trans-periplasmic membrane protein TonB. The polypeptide is Vitamin B12 transporter BtuB (Yersinia pestis bv. Antiqua (strain Antiqua)).